Reading from the N-terminus, the 568-residue chain is Proton-coupled zinc antiporter SLC30A9, mitochondrial (568 aa).

The N-terminal 67 residues, 1–67 (MLPGLAAAAA…IGTLSQVKLY (67 aa)), are a transit peptide targeting the mitochondrion. A run of 5 helical transmembrane segments spans residues 239–259 (VVMVAICINGLNCFFKFLAWI), 314–334 (GVGIFMMGAGLSWYHGVMGLL), 342–362 (LLWAYCILAGSLVSEGATLLV), 392–412 (VILLEDTAAVLGVIIAATCMG), and 424–444 (SLGSLGVGTLLGMVSAFLIYT). An LXXLL motif motif is present at residues 462–466 (LTELL).

This sequence belongs to the cation diffusion facilitator (CDF) transporter (TC 2.A.4) family. SLC30A subfamily. In terms of assembly, interacts with GRIP1, ESR1 and AR. As to expression, ubiquitously expressed in fetal and adult tissues and cancer cell lines.

It localises to the mitochondrion membrane. The protein localises to the nucleus. Its subcellular location is the endoplasmic reticulum. It carries out the reaction Zn(2+)(in) + 2 H(+)(out) = Zn(2+)(out) + 2 H(+)(in). Functionally, mitochondrial proton-coupled zinc ion antiporter mediating the export of zinc from the mitochondria and involved in zinc homeostasis, zinc mobilization as well as mitochondrial morphology and health. In nucleus, functions as a secondary coactivator for nuclear receptors by cooperating with p160 coactivators subtypes. Plays a role in transcriptional activation of Wnt-responsive genes. This chain is Proton-coupled zinc antiporter SLC30A9, mitochondrial, found in Homo sapiens (Human).